Reading from the N-terminus, the 186-residue chain is ADP-ribosylation factor-like protein DDB_G0292332 (186 aa).

GTP is bound by residues 24 to 31 (GVENVGKT), 78 to 82 (DIGGK), and 138 to 141 (NKQD).

It belongs to the small GTPase superfamily. Arf family.

In terms of biological role, binds and exchanges GTP and GDP. This Dictyostelium discoideum (Social amoeba) protein is ADP-ribosylation factor-like protein DDB_G0292332.